The sequence spans 377 residues: Protein-arginine rhamnosyltransferase (377 aa).

Y15 is a binding site for dTDP-beta-L-rhamnose. Residue D17 is the Proton acceptor of the active site. Residues Y193, Q255, and 271-275 (RGEDS) each bind dTDP-beta-L-rhamnose. E273 is an active-site residue.

Belongs to the glycosyltransferase 104 family.

The enzyme catalyses dTDP-beta-L-rhamnose + L-arginyl-[protein] = N(omega)-(alpha-L-rhamnosyl)-L-arginyl-[protein] + dTDP + H(+). Its function is as follows. Protein-arginine rhamnosyltransferase that catalyzes the transfer of a single rhamnose to elongation factor P (EF-P) on 'Lys-32', a modification required for EF-P-dependent rescue of polyproline stalled ribosomes. In Pseudomonas putida (strain ATCC 47054 / DSM 6125 / CFBP 8728 / NCIMB 11950 / KT2440), this protein is Protein-arginine rhamnosyltransferase.